A 381-amino-acid polypeptide reads, in one-letter code: MESIGVVAPHTMHFAEPLRLQSGSVLGNYQLVVETYGELNAARSNAVLVCHALNASHHVAGVYADDPRSTGWWDNMVGPGKPLDTNRFFVIGVNNLGSCFGSTGPMSIDPATGTPYGARFPVVTVEDWVHAQARVADAFGIERFAAVMGGSLGGMQALAWSLLYPERVAHCIDIASTPKLSAQNIAFNEVARSAILSDPDFHGGDYYAHGVKPRRGLRVARMIGHITYLSDDDMAEKFGRALRRADGALDAYNFNFDVEFEVESYLRYQGDKFADYFDANTYLLITRALDYFDPAKAFNGNLSAALAHTKAKYLVASFTTDWRFAPARSREIVKALLDNRRSVSYAEIDAPHGHDAFLLDDARYHNLVRAYYERIAEEVGA.

In terms of domain architecture, AB hydrolase-1 spans 45–360 (NAVLVCHALN…PHGHDAFLLD (316 aa)). The active-site Nucleophile is the Ser-151. Arg-221 is a substrate binding site. Catalysis depends on residues Asp-321 and His-354. Position 355 (Asp-355) interacts with substrate.

Belongs to the AB hydrolase superfamily. MetX family. As to quaternary structure, homodimer.

It is found in the cytoplasm. The catalysed reaction is L-homoserine + succinyl-CoA = O-succinyl-L-homoserine + CoA. It functions in the pathway amino-acid biosynthesis; L-methionine biosynthesis via de novo pathway; O-succinyl-L-homoserine from L-homoserine: step 1/1. Its function is as follows. Transfers a succinyl group from succinyl-CoA to L-homoserine, forming succinyl-L-homoserine. The protein is Homoserine O-succinyltransferase of Burkholderia thailandensis (strain ATCC 700388 / DSM 13276 / CCUG 48851 / CIP 106301 / E264).